The chain runs to 49 residues: Large ribosomal subunit protein bL33B (49 aa).

This sequence belongs to the bacterial ribosomal protein bL33 family.

Its function is as follows. Plays a role in sporulation at high temperatures. This is Large ribosomal subunit protein bL33B (rpmGB) from Bacillus subtilis (strain 168).